Reading from the N-terminus, the 149-residue chain is Calmodulin-like protein (149 aa).

EF-hand domains are found at residues 6–41, 42–76, 78–113, and 113–148; these read TTQA…VGSN, PTQQ…KMKY, DSEA…IGEK, and KLTK…SKSF. Positions 19, 21, 23, 25, and 30 each coordinate Ca(2+).

This sequence belongs to the calmodulin family.

The protein localises to the contractile vacuole. Mediates the control of a large number of enzymes, ion channels and other proteins by Ca(2+) ions. Among the enzymes to be stimulated by the calmodulin-Ca(2+) complex are a number of protein kinases and phosphatases. This Dictyostelium discoideum (Social amoeba) protein is Calmodulin-like protein (calB).